The sequence spans 205 residues: RPW8-like protein 2 (205 aa).

The 153-residue stretch at M1 to I153 folds into the RPW8 domain. The chain crosses the membrane as a helical span at residues I7–I23. Coiled-coil stretches lie at residues E70–R92 and A125–Q147.

Belongs to the plant RPW8 protein family.

It is found in the membrane. Functionally, probable disease resistance (R) protein. This chain is RPW8-like protein 2, found in Arabidopsis thaliana (Mouse-ear cress).